The following is a 132-amino-acid chain: ATP synthase epsilon chain, chloroplastic (132 aa).

The protein belongs to the ATPase epsilon chain family. As to quaternary structure, F-type ATPases have 2 components, CF(1) - the catalytic core - and CF(0) - the membrane proton channel. CF(1) has five subunits: alpha(3), beta(3), gamma(1), delta(1), epsilon(1). CF(0) has three main subunits: a, b and c.

The protein resides in the plastid. Its subcellular location is the chloroplast thylakoid membrane. Functionally, produces ATP from ADP in the presence of a proton gradient across the membrane. The chain is ATP synthase epsilon chain, chloroplastic from Pylaiella littoralis (Seaweed).